The following is a 144-amino-acid chain: Flagellar assembly factor FliW (144 aa).

Belongs to the FliW family. As to quaternary structure, monomer. One copy interacts with the each alpha-helical wing of the CsrA homodimer, yielding a FliW-CsrA(2)-FliW complex. Comparison with a CsrA-mRNA structure (2JPP) suggests CsrA cannot bind both mRNA and FliW at the same time. Interacts with flagellin.

The protein resides in the cytoplasm. Acts as an anti-CsrA protein, binds CsrA and prevents it from repressing translation of its target genes, one of which is flagellin. Binds to flagellin and participates in the assembly of the flagellum. Functionally, allosterically inhibits CsrA binding to mRNA in a non-competitive fashion by preventing CsrA binding to the 5'-UTR. This is Flagellar assembly factor FliW from Geobacillus thermodenitrificans (strain NG80-2).